The primary structure comprises 739 residues: Double-strand break repair protein mus-23 (739 aa).

Residues Asp-16, His-18, Asp-56, and Asn-123 each coordinate Mn(2+). Catalysis depends on His-124, which acts as the Proton donor. Mn(2+)-binding residues include His-212, His-240, and His-242. Residues 516-739 form a disordered region; that stretch reads FDAGQHKQAQ…KPGLLARRLG (224 aa). Basic residues predominate over residues 523-532; that stretch reads QAQRTKRFKR. Over residues 559–568 the composition is skewed to basic and acidic residues; that stretch reads VEPKGNDRPT. Positions 599–636 are enriched in low complexity; that stretch reads KRGAAAKTTAAAKKAAPGKKAAPAKKAAPAKKAAPAKK. The span at 637–646 shows a compositional bias: basic residues; the sequence is APARGRKKKT. The span at 650–686 shows a compositional bias: acidic residues; the sequence is DSDEEEEEDYPEDDDEEEEEADEEEEDVIMEDDEEDP. A compositionally biased stretch (low complexity) spans 694–722; sequence KATSRVASTRASARATPVRATPARATQAR.

It belongs to the MRE11/RAD32 family. As to quaternary structure, component of the MRN complex composed of two heterodimers RAD50 and MRE11 associated with a single NBS1. Mn(2+) is required as a cofactor.

It localises to the nucleus. The protein localises to the chromosome. Its subcellular location is the telomere. Functionally, core component of the MRN complex, which plays a central role in double-strand break (DSB) repair, DNA recombination, maintenance of telomere integrity and meiosis. The MRN complex is involved in the repair of DNA double-strand breaks (DSBs) via homologous recombination (HR), an error-free mechanism which primarily occurs during S and G2 phases. The complex (1) mediates the end resection of damaged DNA, which generates proper single-stranded DNA, a key initial steps in HR, and is (2) required for the recruitment of other repair factors and efficient activation of ATM and ATR upon DNA damage. Within the MRN complex, MRE11 possesses both single-strand endonuclease activity and double-strand-specific 3'-5' exonuclease activity. MRE11 first endonucleolytically cleaves the 5' strand at DNA DSB ends to prevent non-homologous end joining (NHEJ) and licence HR. It then generates a single-stranded DNA gap via 3' to 5' exonucleolytic degradation, which is required for single-strand invasion and recombination. The MRN complex is also required for the processing of R-loops. The protein is Double-strand break repair protein mus-23 (mus-23) of Neurospora crassa (strain ATCC 24698 / 74-OR23-1A / CBS 708.71 / DSM 1257 / FGSC 987).